Here is a 121-residue protein sequence, read N- to C-terminus: Large ribosomal subunit protein bL12 (121 aa).

Belongs to the bacterial ribosomal protein bL12 family. Homodimer. Part of the ribosomal stalk of the 50S ribosomal subunit. Forms a multimeric L10(L12)X complex, where L10 forms an elongated spine to which 2 to 4 L12 dimers bind in a sequential fashion. Binds GTP-bound translation factors.

Its function is as follows. Forms part of the ribosomal stalk which helps the ribosome interact with GTP-bound translation factors. Is thus essential for accurate translation. The protein is Large ribosomal subunit protein bL12 of Lactobacillus delbrueckii subsp. bulgaricus (strain ATCC BAA-365 / Lb-18).